A 446-amino-acid chain; its full sequence is Histidine--tRNA ligase (446 aa).

This sequence belongs to the class-II aminoacyl-tRNA synthetase family. Homodimer.

It is found in the cytoplasm. The catalysed reaction is tRNA(His) + L-histidine + ATP = L-histidyl-tRNA(His) + AMP + diphosphate + H(+). This is Histidine--tRNA ligase from Burkholderia pseudomallei (strain 1710b).